The primary structure comprises 482 residues: Histone deacetylase 1 (482 aa).

The interval Arg-9–Asp-321 is histone deacetylase. Residues Gly-27 and Lys-31 each contribute to the 1D-myo-inositol 1,4,5,6-tetrakisphosphate site. Lys-74 is subject to N6-acetyllysine; alternate. Residue Lys-74 forms a Glycyl lysine isopeptide (Lys-Gly) (interchain with G-Cter in SUMO2); alternate linkage. His-141 is an active-site residue. Residues Asp-176 and His-178 each coordinate Zn(2+). Position 220 is an N6-acetyllysine (Lys-220). The residue at position 261 (Cys-261) is an S-nitrosocysteine. Asp-264 contributes to the Zn(2+) binding site. Residue Arg-270 coordinates 1D-myo-inositol 1,4,5,6-tetrakisphosphate. At Cys-273 the chain carries S-nitrosocysteine. Residues Pro-390–Asp-400 are compositionally biased toward acidic residues. A disordered region spans residues Pro-390–Ala-482. Residues Ser-393, Ser-406, Ser-409, Ser-421, and Ser-423 each carry the phosphoserine modification. A compositionally biased stretch (basic and acidic residues) spans Pro-401 to Cys-416. Over residues Glu-417 to Gly-427 the composition is skewed to acidic residues. At Lys-432 the chain carries N6-methylated lysine; by EHMT2. Lys-438 participates in a covalent cross-link: Glycyl lysine isopeptide (Lys-Gly) (interchain with G-Cter in SUMO2). Over residues Val-443–Ala-482 the composition is skewed to basic and acidic residues. Lys-444 is covalently cross-linked (Glycyl lysine isopeptide (Lys-Gly) (interchain with G-Cter in SUMO2); alternate). A Glycyl lysine isopeptide (Lys-Gly) (interchain with G-Cter in SUMO); alternate cross-link involves residue Lys-444. Residues Lys-456, Lys-457, and Lys-473 each participate in a glycyl lysine isopeptide (Lys-Gly) (interchain with G-Cter in SUMO2) cross-link. Lys-476 is covalently cross-linked (Glycyl lysine isopeptide (Lys-Gly) (interchain with G-Cter in SUMO2); alternate). Lys-476 is covalently cross-linked (Glycyl lysine isopeptide (Lys-Gly) (interchain with G-Cter in SUMO); alternate). A Glycyl lysine isopeptide (Lys-Gly) (interchain with G-Cter in SUMO2) cross-link involves residue Lys-480.

The protein belongs to the histone deacetylase family. HD type 1 subfamily. As to quaternary structure, part of the core histone deacetylase (HDAC) complex composed of HDAC1, HDAC2, RBBP4 and RBBP7, the core complex associates with SIN3, SAP18 and SAP30 to form the SIN3 HDAC complex. Component of the nucleosome remodeling and deacetylase (NuRD) repressor complex, composed of core proteins MTA1, MTA2, MTA3, RBBP4, RBBP7, HDAC1, HDAC2, MBD2, MBD3, and peripherally associated proteins CDK2AP1, CDK2AP2, GATAD2A, GATAD2B, CHD3, CHD4 and CHD5. The exact stoichiometry of the NuRD complex is unknown, and some subunits such as MBD2 and MBD3, GATAD2A and GATAD2B, and CHD3, CHD4 and CHD5 define mutually exclusive NuRD complexes. Component of a BHC histone deacetylase complex that contains HDAC1, HDAC2, HMG20B/BRAF35, KDM1A, RCOR1/CoREST and PHF21A/BHC80. The BHC complex may also contain ZMYM2, ZNF217, ZMYM3, GSE1 and GTF2I. Component of a mSin3A corepressor complex that contains SIN3A, SAP130, SUDS3/SAP45, ARID4B/SAP180, HDAC1 and HDAC2. Found in a trimeric complex with APBB1 and TSHZ3; the interaction between HDAC1 and APBB1 is mediated by TSHZ3. Forms a complex comprising APPL1, RUVBL2, APPL2, CTNNB1 and HDAC2. Component of a RCOR/GFI/KDM1A/HDAC complex. Part of a complex composed of TRIM28, HDAC1, HDAC2 and EHMT2. Part of a complex containing at least CDYL, MIER1, MIER2, HDAC1 and HDAC2. The large PER complex involved in the histone deacetylation is composed of at least HDAC1, PER2, SFPQ and SIN3A. Associates with the 9-1-1 complex; interacts with HUS1. Found in a complex with DNMT3A and HDAC7. Found in a complex with YY1, SIN3A and GON4L. Identified in a histone deacetylase complex that contains DNTTIP1, HDAC1 and MIDEAS; this complex assembles into a tetramer that contains four copies of each protein chain. Found in a complex composed of at least SINHCAF, SIN3A, HDAC1, SAP30, RBBP4, OGT and TET1. Component of the SIN3B complex, which includes SIN3B, HDAC1, PHF12 and MORF4L1. Interacts with GFI1; the interaction is direct. Interacts directly with GFI1B. Interacts with TSHZ3 (via N-terminus); the interaction is direct. Interacts with APEX1; the interaction is not dependent on the acetylated status of APEX1. Interacts with BANP. Interacts with BAZ2A/TIP5. Interacts with BCL6. Interacts with BCOR. Interacts with BHLHE40/DEC1. Interacts with BRCC3; this interaction is enhanced in the presence of PWWP2B. Interacts with BRMS1. Interacts with BRMS1L. Interacts with C10orf90/FATS (via its N-terminal); the interaction prevents binding of HDAC1 to CDKN1A/p21 and facilitates the acetylation and stabilization of CDKN1A/p21. Interacts with CBFA2T3. Interacts with CCAR2. Interacts with CDK2AP1. Interacts with CHD3. Interacts with CHD4. Interacts with CHFR. Interacts with CIART. Interacts with CDKN1A/p21. Interacts with CDK5 complexed to CDK5R1 (p25). Interacts with CRY1. Interacts with DAXX. Interacts with DDIT3/CHOP. Interacts with DDX5. Interacts with DHX36; this interaction occurs in a RNA-dependent manner. Interacts with DNMT1. Interacts with DNTTIP1. Interacts with E4F1. Interacts with EP300. Interacts with ERCC6. Interacts with GATAD2A. Interacts with HCFC1. Interacts with HDAC9. Interacts with HUS1. Interacts with INSM1. Interacts with KDM4A. Interacts with KDM5A; this interaction impairs histone deacetylation. Interacts with KDM5B. Interacts with KLF1. Interacts with MBD3L2. Interacts with MIER1. Interacts with NFE4. Interacts with NR4A2/NURR1. Interacts with NR1D2 (via C-terminus). Interacts with NRIP1. Interacts with NSD2. Interacts with PACS2. Interacts with PHB2. Interacts with PPHLN1. Interacts with PRDM6. Interacts with PRDM16. Interacts with PWWP2A in a MTA1-dependent manner. Interacts with PWWP2B. Interacts with RB1. Interacts with RERE. Interacts with SANBR (via the BTB domain). Interacts with SAMSN1. Interacts with SAP30L. Interacts with SETDB1. Interacts with SIN3A. Interacts with SMAD3. Interacts with SMAD4; positively regulated by ZBTB7A. Interacts with SMARCAD1. Interacts with SMARCA4/BRG1. Interacts with SMYD2. Interacts with SMYD4 (via MYND-type zinc finger). Interacts with SP1; the interaction deacetylates SP1 and regulates its transcriptional activity. Interacts with SP3; the interaction deacetylates SP3 and regulates its transcriptional activity. In vitro, C(18) ceramides increase this interaction and the subsequent SP3 deacetylation and SP3-mediated repression of the TERT promoter. Interacts with SPEN/MINT. Interacts with SPHK2. Interacts with SUV39H1. Interacts with TGIF. Interacts with TGIF2. Interacts with TRAF6. Interacts with TRIM28; the interaction recruits HDAC1 to E2F1 and inhibits its acetylation. Interacts with TSC22D3 isoform 1; this interaction affects HDAC1 activity on MYOG promoter and thus inhibits MYOD1 transcriptional activity. Interacts with UHRF1. Interacts with UHRF2. Interacts with ZBTB7A. Interacts with ZMYND8. Interacts with ZMYND15. Interacts with ZNF431. Interacts with ZNF516; this interaction is enhanced in the presence of PWWP2B. Interacts with ZNF541. Interacts with ZNF638. Interacts with ZNHIT1. Interacts with the non-histone region of MACROH2A1. Identified in a complex with HDAC2, KCTD19, DNTTIP1 and ZNF541. Interacts with MSX3. Interacts with VRK1. The cofactor is Zn(2+). In terms of processing, sumoylated on Lys-444 and Lys-476; which promotes enzymatic activity. Desumoylated by SENP1. Phosphorylation on Ser-421 and Ser-423 promotes enzymatic activity and interactions with NuRD and SIN3 complexes. Phosphorylated by CDK5. Post-translationally, ubiquitinated by CHFR and KCTD11, leading to its degradation by the proteasome.

The protein localises to the nucleus. The catalysed reaction is N(6)-acetyl-L-lysyl-[histone] + H2O = L-lysyl-[histone] + acetate. It catalyses the reaction N(6)-acetyl-L-lysyl-[protein] + H2O = L-lysyl-[protein] + acetate. The enzyme catalyses N(6)-(2E)-butenoyl-L-lysyl-[protein] + H2O = (2E)-2-butenoate + L-lysyl-[protein]. It carries out the reaction N(6)-[(S)-lactoyl]-L-lysyl-[protein] + H2O = (S)-lactate + L-lysyl-[protein]. Inositol tetraphosphate (1D-myo-inositol 1,4,5,6-tetrakisphosphate) may act as an intermolecular glue between HDAC1 and N-Cor repressor complex components. Its function is as follows. Histone deacetylase that catalyzes the deacetylation of lysine residues on the N-terminal part of the core histones (H2A, H2B, H3 and H4). Histone deacetylation gives a tag for epigenetic repression and plays an important role in transcriptional regulation, cell cycle progression and developmental events. Histone deacetylases act via the formation of large multiprotein complexes. Acts as a component of the histone deacetylase NuRD complex which participates in the remodeling of chromatin. As part of the SIN3B complex is recruited downstream of the constitutively active genes transcriptional start sites through interaction with histones and mitigates histone acetylation and RNA polymerase II progression within transcribed regions contributing to the regulation of transcription. Also functions as a deacetylase for non-histone targets, such as NR1D2, RELA, SP1, SP3, STAT3 and TSHZ3. Deacetylates SP proteins, SP1 and SP3, and regulates their function. Component of the BRG1-RB1-HDAC1 complex, which negatively regulates the CREST-mediated transcription in resting neurons. Upon calcium stimulation, HDAC1 is released from the complex and CREBBP is recruited, which facilitates transcriptional activation. Deacetylates TSHZ3 and regulates its transcriptional repressor activity. Deacetylates 'Lys-310' in RELA and thereby inhibits the transcriptional activity of NF-kappa-B. Deacetylates NR1D2 and abrogates the effect of KAT5-mediated relieving of NR1D2 transcription repression activity. Component of a RCOR/GFI/KDM1A/HDAC complex that suppresses, via histone deacetylase (HDAC) recruitment, a number of genes implicated in multilineage blood cell development. Involved in CIART-mediated transcriptional repression of the circadian transcriptional activator: CLOCK-BMAL1 heterodimer. Required for the transcriptional repression of circadian target genes, such as PER1, mediated by the large PER complex or CRY1 through histone deacetylation. In addition to protein deacetylase activity, also has protein-lysine deacylase activity: acts as a protein decrotonylase and delactylase by mediating decrotonylation ((2E)-butenoyl) and delactylation (lactoyl) of histones, respectively. The sequence is that of Histone deacetylase 1 (Hdac1) from Rattus norvegicus (Rat).